The primary structure comprises 1295 residues: MMEILRGSPALSAFRINKLLARFQAARLPVHTIYAEYVHFADLNAPLNDDEHAQLERLLKYGPALASHAPQGKLLLVTPRPGTISPWSSKATDIAHNCGLQQVNRLERGVAYYIEAGTLTNEQWQQVTAELHDRMMETVFFALDDAEQLFAHHQPTPVTSVDLLGQGRQALIDANLRLGLALAEDEIDYLQDAFTKLGRNPNDIELYMFAQANSEHCRHKIFNADWVIDGEQQPKSLFKMIKNTFETTPDHVLSAYKDNAAVMEGSEVGRYFADHETGRYDFHQEPAHILMKVETHNHPTAISPWPGAATGSGGEIRDEGATGRGAKPKAGLVGFSVSNLRIPGFEQPWEEDFGKPERIVTALDIMTEGPLGGAAFNNEFGRPALNGYFRTYEEKVNSHNGEELRGYHKPIMLAGGIGNIRADHVQKGEINVGAKLVVLGGPAMNIGLGGGAASSMASGQSDADLDFASVQRDNPEMERRCQEVIDRCWQLGDANPILFIHDVGAGGLSNAMPELVSDGGRGGKFELRDILSDEPGMSPLEIWCNESQERYVLAVAADQLPLFDELCKRERAPYAVIGEATEELHLSLHDRHFDNQPIDLPLDVLLGKTPKMTRDVQTLKAKGDALAREGITIADAVKRVLHLPTVAEKTFLVTIGDRSVTGMVARDQMVGPWQVPVANCAVTTASLDSYYGEAMAIGERAPVALLDFAASARLAVGEALTNIAATQIGDIKRIKLSANWMAAAGHPGEDAGLYEAVKAVGEELCPALGLTIPVGKDSMSMKTRWQEGNEECEMTSPLSLVISAFARVEDVRHTITPQLSTEDNALLLIDLGKGNNALGATALAQVYRQLGDKPADVRDVAQLKGFYDAIQALVAQRKLLAYHDRSDGGLLVTLAEMAFAGHCGIDADIATLGDDRLAALFSEELGAVIQVRAADREAVEAVLAQHGLADCVHYVGQAVSGDRFVITANGQTVFSESRTTLRVWWAETTWQMQRLRDNPECADQEHQAKSNDADPGLNVKLSFDINEDVAAPFIATGARPKVAVLREQGVNSHVEMAAAFHRAGFDAIDVHMSDLLAGRTGLEGFHALVACGGFSYGDVLGAGEGWAKSILFNDRVRDEFATFFHRPQTLALGVCNGCQMMSNLRELIPGSELWPRFVRNTSDRFEARFSLVEVTQSPSLLLQGMVGSQMPIAVSHGEGRVEVRDAAHLAALESKGLVALRYVDNFGKVTETYPANPNGSPNGITAVTTESGRVTIMMPHPERVFRTVSNSWHPENWGEDGPWMRIFRNARKQLG.

The tract at residues 305–327 (WPGAATGSGGEIRDEGATGRGAK) is disordered. Residues 307-318 (GAATGSGGEIRD) and Ala-678 each bind ATP. Positions 718, 722, and 884 each coordinate Mg(2+). Ser-886 contributes to the ATP binding site. Residues 1042 to 1295 (VAVLREQGVN…IFRNARKQLG (254 aa)) form the Glutamine amidotransferase type-1 domain. Cys-1135 (nucleophile) is an active-site residue. Catalysis depends on residues His-1260 and Glu-1262.

The protein in the N-terminal section; belongs to the FGAMS family. As to quaternary structure, monomer.

It localises to the cytoplasm. The catalysed reaction is N(2)-formyl-N(1)-(5-phospho-beta-D-ribosyl)glycinamide + L-glutamine + ATP + H2O = 2-formamido-N(1)-(5-O-phospho-beta-D-ribosyl)acetamidine + L-glutamate + ADP + phosphate + H(+). It participates in purine metabolism; IMP biosynthesis via de novo pathway; 5-amino-1-(5-phospho-D-ribosyl)imidazole from N(2)-formyl-N(1)-(5-phospho-D-ribosyl)glycinamide: step 1/2. Phosphoribosylformylglycinamidine synthase involved in the purines biosynthetic pathway. Catalyzes the ATP-dependent conversion of formylglycinamide ribonucleotide (FGAR) and glutamine to yield formylglycinamidine ribonucleotide (FGAM) and glutamate. The polypeptide is Phosphoribosylformylglycinamidine synthase (Escherichia coli O6:K15:H31 (strain 536 / UPEC)).